A 501-amino-acid chain; its full sequence is ATP synthase subunit alpha, chloroplastic (501 aa).

170-177 (GDRQTGKT) contributes to the ATP binding site.

This sequence belongs to the ATPase alpha/beta chains family. In terms of assembly, F-type ATPases have 2 components, CF(1) - the catalytic core - and CF(0) - the membrane proton channel. CF(1) has five subunits: alpha(3), beta(3), gamma(1), delta(1), epsilon(1). CF(0) has four main subunits: a, b, b' and c.

It localises to the plastid. It is found in the chloroplast thylakoid membrane. The catalysed reaction is ATP + H2O + 4 H(+)(in) = ADP + phosphate + 5 H(+)(out). Its function is as follows. Produces ATP from ADP in the presence of a proton gradient across the membrane. The alpha chain is a regulatory subunit. This Pisum sativum (Garden pea) protein is ATP synthase subunit alpha, chloroplastic.